The chain runs to 151 residues: Large ribosomal subunit protein bL9 (151 aa).

This sequence belongs to the bacterial ribosomal protein bL9 family.

Binds to the 23S rRNA. The chain is Large ribosomal subunit protein bL9 from Desulfosudis oleivorans (strain DSM 6200 / JCM 39069 / Hxd3) (Desulfococcus oleovorans).